The chain runs to 246 residues: Ribonuclease 3 (246 aa).

Residues 8–137 enclose the RNase III domain; the sequence is ANRLKTRLGF…LLGAIYLDQG (130 aa). Glu-50 serves as a coordination point for Mg(2+). Residue Asp-54 is part of the active site. Asp-123 and Glu-126 together coordinate Mg(2+). The active site involves Glu-126. The 70-residue stretch at 164 to 233 folds into the DRBM domain; it reads DYKTELQEIL…AKDAFQHLEG (70 aa). The disordered stretch occupies residues 212–246; sequence SGHSKKEAEQQAAKDAFQHLEGMGKSGHKSAGPIR.

The protein belongs to the ribonuclease III family. Homodimer. The cofactor is Mg(2+).

Its subcellular location is the cytoplasm. It catalyses the reaction Endonucleolytic cleavage to 5'-phosphomonoester.. Digests double-stranded RNA. Involved in the processing of primary rRNA transcript to yield the immediate precursors to the large and small rRNAs (23S and 16S). Processes some mRNAs, and tRNAs when they are encoded in the rRNA operon. Processes pre-crRNA and tracrRNA of type II CRISPR loci if present in the organism. This is Ribonuclease 3 from Desulforamulus reducens (strain ATCC BAA-1160 / DSM 100696 / MI-1) (Desulfotomaculum reducens).